A 419-amino-acid polypeptide reads, in one-letter code: MSQPSDSTAPLQGSARDREIVEARVIVTCPGRNFVTLKIRTRSGITGVGDATLNGRELAVAAYLQEHLVPNLIGRDAGRIEDIWQFFYRGAYWRRGPVTMSAIAAVDVALWDILGKMAGMPLYQLLGGRSREGALVYGHANGRDIAETSDEVGRFREMGFIAIRAQCGVPGIKKTYGISVGGKPYEPAESELPTETVWSTPRYLGVVPRLFEQLRADHGDEIELLHDAHHRLTPIEAARLGRDLEPYRLFWLEDATPAENQRAFEIIRQHTVTPLAVGEVFNSIWDCKHLIEQQLIDYIRTTIVHAGGLTHVRRLADFAALHQVRTGFHGATDLSPVCMGAALHFDTWVPNFGIQEYMFHSDEANAVFPHDYQFRAGRLHCGETPGHGVDIDEALAARYPYTPKQLPILRLEDGTMGDW.

Substrate is bound by residues asparagine 54 and histidine 139. Tyrosine 176 (proton donor/acceptor) is an active-site residue. Residue aspartate 227 coordinates Mg(2+). Histidine 229 acts as the Proton donor/acceptor in catalysis. Glutamate 253 and glutamate 279 together coordinate Mg(2+). Residues glutamate 279, arginine 300, histidine 329, aspartate 333, and glutamate 356 each contribute to the substrate site.

Belongs to the mandelate racemase/muconate lactonizing enzyme family. GalD subfamily. Mg(2+) is required as a cofactor.

It catalyses the reaction D-mannonate = 2-dehydro-3-deoxy-D-gluconate + H2O. Its pathway is carbohydrate metabolism; pentose and glucuronate interconversion. Its function is as follows. Catalyzes the dehydration of D-mannonate. Has no detectable activity with a panel of 70 other acid sugars (in vitro). The sequence is that of D-mannonate dehydratase from Xanthomonas oryzae pv. oryzicola (strain BLS256).